Consider the following 94-residue polypeptide: MNLKPIGDRLVLKKQEKEEEKTFSGIVLPSSAKEAPVYAEVLAIGSEVEEDEKMKGNIKVGDKVIYSKYAGTEIKLEDTDYILVKYEDILAVVE.

This sequence belongs to the GroES chaperonin family. In terms of assembly, heptamer of 7 subunits arranged in a ring. Interacts with the chaperonin GroEL.

It is found in the cytoplasm. Functionally, together with the chaperonin GroEL, plays an essential role in assisting protein folding. The GroEL-GroES system forms a nano-cage that allows encapsulation of the non-native substrate proteins and provides a physical environment optimized to promote and accelerate protein folding. GroES binds to the apical surface of the GroEL ring, thereby capping the opening of the GroEL channel. This is Co-chaperonin GroES from Finegoldia magna (strain ATCC 29328 / DSM 20472 / WAL 2508) (Peptostreptococcus magnus).